Consider the following 446-residue polypeptide: Phosphoglucosamine mutase (446 aa).

Ser103 serves as the catalytic Phosphoserine intermediate. Mg(2+)-binding residues include Ser103, Asp242, Asp244, and Asp246. Phosphoserine is present on Ser103.

It belongs to the phosphohexose mutase family. Requires Mg(2+) as cofactor. Post-translationally, activated by phosphorylation.

The enzyme catalyses alpha-D-glucosamine 1-phosphate = D-glucosamine 6-phosphate. Catalyzes the conversion of glucosamine-6-phosphate to glucosamine-1-phosphate. This Vibrio campbellii (strain ATCC BAA-1116) protein is Phosphoglucosamine mutase.